We begin with the raw amino-acid sequence, 313 residues long: Potassium channel subfamily K member 6 (313 aa).

The Cytoplasmic segment spans residues 1–4; sequence MRRG. A helical transmembrane segment spans residues 5-25; sequence ALLAGALAAYAAYLVLGALLV. Residues asparagine 79 and asparagine 85 are each glycosylated (N-linked (GlcNAc...) asparagine). Positions 90 to 115 form an intramembrane region, pore-forming; that stretch reads AWDFASALFFASTLITTVGYGYTTPL. Residues threonine 106, valine 107, glycine 108, and tyrosine 109 each coordinate K(+). The tract at residues 106 to 111 is selectivity filter 1; the sequence is TVGYGY. Residues 121-141 traverse the membrane as a helical segment; it reads AFSIAFALLGVPTTMLLLTAS. Residues 142–172 lie on the Cytoplasmic side of the membrane; that stretch reads AQRLSLLLTHVPLSWLSMRWGWDPRRAACWH. Residues 173–193 form a helical membrane-spanning segment; sequence LVALLGVVVTVCFLVPAVIFA. An intramembrane region (pore-forming) is located at residues 199-223; sequence WSFLDAFYFCFISLSTIGLGDYVPG. K(+)-binding residues include threonine 214, isoleucine 215, and glycine 216. Residues 214–219 form a selectivity filter 2 region; sequence TIGLGD. A helical transmembrane segment spans residues 236 to 256; that stretch reads VLVTVYLFLGLVAMVLVLQTF. At 257–313 the chain is on the cytoplasmic side; the sequence is RHVSDLHGLTELILLPPPCPASFNADEDDRVDILGPQPESHQQLSASSHTDYASIPR. The short motif at 282 to 290 is the Lysosomal targeting signal element; that stretch reads DEDDRVDIL. The interval 288-313 is disordered; sequence DILGPQPESHQQLSASSHTDYASIPR. The segment covering 295 to 307 has biased composition (polar residues); the sequence is ESHQQLSASSHTD. Residues 308-312 carry the Lysosomal targeting signal motif; sequence YASIP.

The protein belongs to the two pore domain potassium channel (TC 1.A.1.8) family. In terms of assembly, homodimer; disulfide-linked. In terms of processing, N-glycosylation is necessary for targeting to lysosomes. As to expression, widespread expression, detected in all tissues tested except for skeletal muscle. Strongest expression in placenta, pancreas, heart, colon and spleen, lower levels detected in peripheral blood leukocytes, lung, liver, kidney and thymus. Lowest expression detected in brain.

The protein localises to the late endosome membrane. The protein resides in the lysosome membrane. The catalysed reaction is K(+)(in) = K(+)(out). Functionally, k(+) channel that conducts outward rectifying currents at the membranes of the endolysosomal system. Active in lysosomes where it regulates lysosome numbers and size. In macrophages, enables K(+) efflux coupled to ATP-induced NLRP3 inflammasome activation upon bacterial infection. Cooperates with ATP-gated P2RX7 channels to activate NLRP3 inflammasome, with P2RX7 conducting Ca(2+) and Na(+) influx that sets the membrane potential for K(+) efflux. Its function is as follows. Does not display channel activity. The sequence is that of Potassium channel subfamily K member 6 from Homo sapiens (Human).